The following is a 445-amino-acid chain: Mutanase Pc12g07500 (445 aa).

A signal peptide spans 1 to 21 (MIWKSLFSALAILTHILPALT). Asparagine 386 and asparagine 437 each carry an N-linked (GlcNAc...) asparagine glycan.

Belongs to the glycosyl hydrolase 71 family. In terms of assembly, monomer.

The protein localises to the secreted. The enzyme catalyses Endohydrolysis of (1-&gt;3)-alpha-D-glucosidic linkages in isolichenin, pseudonigeran and nigeran.. Functionally, hydrolyzes 1,3-alpha-glucan predominantly into pentasaccharides. May enhance the efficacy of fungal antibiotics by degrading bacterial exopolysaccharides. The sequence is that of Mutanase Pc12g07500 from Penicillium rubens (strain ATCC 28089 / DSM 1075 / NRRL 1951 / Wisconsin 54-1255) (Penicillium chrysogenum).